Here is a 346-residue protein sequence, read N- to C-terminus: Anthranilate phosphoribosyltransferase (346 aa).

5-phospho-alpha-D-ribose 1-diphosphate is bound by residues Gly-80, 83 to 84 (GD), Thr-88, 90 to 93 (NIST), 108 to 116 (KHGNTAVSS), and Ser-120. Gly-80 is a binding site for anthranilate. Ser-92 provides a ligand contact to Mg(2+). Asn-111 is a binding site for anthranilate. Residue Arg-166 coordinates anthranilate. The Mg(2+) site is built by Asp-225 and Glu-226.

The protein belongs to the anthranilate phosphoribosyltransferase family. As to quaternary structure, homodimer. It depends on Mg(2+) as a cofactor.

It carries out the reaction N-(5-phospho-beta-D-ribosyl)anthranilate + diphosphate = 5-phospho-alpha-D-ribose 1-diphosphate + anthranilate. The protein operates within amino-acid biosynthesis; L-tryptophan biosynthesis; L-tryptophan from chorismate: step 2/5. Its function is as follows. Catalyzes the transfer of the phosphoribosyl group of 5-phosphorylribose-1-pyrophosphate (PRPP) to anthranilate to yield N-(5'-phosphoribosyl)-anthranilate (PRA). This chain is Anthranilate phosphoribosyltransferase, found in Desulforudis audaxviator (strain MP104C).